Reading from the N-terminus, the 486-residue chain is Siroheme synthase (486 aa).

A precorrin-2 dehydrogenase /sirohydrochlorin ferrochelatase region spans residues 1–204; sequence MNYLPIFVDL…HQIEQAEALV (204 aa). Residues 22–23 and 43–44 contribute to the NAD(+) site; these read HV and EK. Ser128 carries the post-translational modification Phosphoserine. A uroporphyrinogen-III C-methyltransferase region spans residues 216 to 486; it reads GEVSLVGAGP…NKETHWKQAA (271 aa). Position 225 (Pro225) interacts with S-adenosyl-L-methionine. Asp248 acts as the Proton acceptor in catalysis. Lys270 functions as the Proton donor in the catalytic mechanism. S-adenosyl-L-methionine-binding positions include 301–303, Val306, 331–332, Met383, and Gly412; these read GGD and TA.

In the N-terminal section; belongs to the precorrin-2 dehydrogenase / sirohydrochlorin ferrochelatase family. The protein in the C-terminal section; belongs to the precorrin methyltransferase family.

The enzyme catalyses uroporphyrinogen III + 2 S-adenosyl-L-methionine = precorrin-2 + 2 S-adenosyl-L-homocysteine + H(+). It carries out the reaction precorrin-2 + NAD(+) = sirohydrochlorin + NADH + 2 H(+). It catalyses the reaction siroheme + 2 H(+) = sirohydrochlorin + Fe(2+). It functions in the pathway cofactor biosynthesis; adenosylcobalamin biosynthesis; precorrin-2 from uroporphyrinogen III: step 1/1. Its pathway is cofactor biosynthesis; adenosylcobalamin biosynthesis; sirohydrochlorin from precorrin-2: step 1/1. The protein operates within porphyrin-containing compound metabolism; siroheme biosynthesis; precorrin-2 from uroporphyrinogen III: step 1/1. It participates in porphyrin-containing compound metabolism; siroheme biosynthesis; siroheme from sirohydrochlorin: step 1/1. It functions in the pathway porphyrin-containing compound metabolism; siroheme biosynthesis; sirohydrochlorin from precorrin-2: step 1/1. Functionally, multifunctional enzyme that catalyzes the SAM-dependent methylations of uroporphyrinogen III at position C-2 and C-7 to form precorrin-2 via precorrin-1. Then it catalyzes the NAD-dependent ring dehydrogenation of precorrin-2 to yield sirohydrochlorin. Finally, it catalyzes the ferrochelation of sirohydrochlorin to yield siroheme. This Actinobacillus pleuropneumoniae serotype 7 (strain AP76) protein is Siroheme synthase.